The sequence spans 702 residues: Autophagy-related protein 9 (702 aa).

Residues 1 to 205 (MFYQPAQNKK…GKGLSCIIVH (205 aa)) are Cytoplasmic-facing. The interval 35-128 (QESLDSDEDE…SKQKPALPNF (94 aa)) is disordered. The span at 38 to 47 (LDSDEDESSP) shows a compositional bias: acidic residues. Over residues 94–107 (SSKVPSKHPSPSFP) the composition is skewed to low complexity. A compositionally biased stretch (polar residues) spans 108–120 (ETTSLRNLQNGSK). A helical transmembrane segment spans residues 206–223 (RLFQILTVSFVIGFTTFI). The Lumenal segment spans residues 224 to 251 (TSCIDWPAVTPHGSLAGVTKSQCIAQMS). The chain crosses the membrane as a helical span at residues 252–270 (PITYLVLWLFLSFLLALWI). The Cytoplasmic segment spans residues 271–421 (YYLTDIPRLW…RRRFIVAGFL (151 aa)). An intramembrane segment occupies 422–446 (NCLFAPIVAIYLVIHNFFRYFNEYH). Residues 447–496 (KNPGALSTRRYTPLALWTFREYNELQHFFDERINDSYAAASHYVSQFPDF) lie on the Cytoplasmic side of the membrane. The chain crosses the membrane as a helical span at residues 497–522 (NMIRLFKYISFILGSFTAILVIITVF). Residues 523–537 (DPELMVTFEITKDRS) are Lumenal-facing. A helical transmembrane segment spans residues 538 to 555 (VLFYLGLFGSLIAVSRSI). Topologically, residues 556–603 (IPDETLVFAPEKALRRVITFTHYMPGWWSDNMHSKAVQQEFCSLYSYR) are cytoplasmic. Residues 604–624 (IVNLLWEILGILLTPVLLFFT) lie within the membrane without spanning it. At 625–702 (FPSCSQDIVD…NTEAPRRDLR (78 aa)) the chain is on the cytoplasmic side.

This sequence belongs to the ATG9 family. In terms of assembly, homotrimer; forms a homotrimer with a central pore that forms a path between the two membrane leaflets. Interacts with ctl1. Phosphorylated by atg1. Atg1 phosphorylation is required for preautophagosome elongation.

It localises to the preautophagosomal structure membrane. It is found in the cytoplasmic vesicle membrane. Its subcellular location is the golgi apparatus membrane. The protein localises to the endoplasmic reticulum membrane. It carries out the reaction a 1,2-diacyl-sn-glycero-3-phosphocholine(in) = a 1,2-diacyl-sn-glycero-3-phosphocholine(out). It catalyses the reaction a 1,2-diacyl-sn-glycero-3-phospho-L-serine(in) = a 1,2-diacyl-sn-glycero-3-phospho-L-serine(out). The enzyme catalyses a 1,2-diacyl-sn-glycero-3-phosphoethanolamine(in) = a 1,2-diacyl-sn-glycero-3-phosphoethanolamine(out). The catalysed reaction is a 1,2-diacyl-sn-glycero-3-phospho-(1D-myo-inositol-3-phosphate)(in) = a 1,2-diacyl-sn-glycero-3-phospho-(1D-myo-inositol-3-phosphate)(out). Functionally, phospholipid scramblase involved in autophagy and cytoplasm to vacuole transport (Cvt) vesicle formation. Cycles between the preautophagosomal structure/phagophore assembly site (PAS) and the cytoplasmic vesicle pool and supplies membrane for the growing autophagosome. Lipid scramblase activity plays a key role in preautophagosomal structure/phagophore assembly by distributing the phospholipids that arrive through atg2 from the cytoplasmic to the luminal leaflet of the bilayer, thereby driving autophagosomal membrane expansion. Also involved in endoplasmic reticulum-specific autophagic process and is essential for the survival of cells subjected to severe ER stress. Different machineries are required for anterograde trafficking to the PAS during either the Cvt pathway or bulk autophagy and for retrograde trafficking. Has a role in meiosis and sporulation. The polypeptide is Autophagy-related protein 9 (Schizosaccharomyces pombe (strain 972 / ATCC 24843) (Fission yeast)).